Here is a 262-residue protein sequence, read N- to C-terminus: Shikimate dehydrogenase (NADP(+)) (262 aa).

Residues 13-15 and T59 contribute to the shikimate site; that span reads SLS. K63 acts as the Proton acceptor in catalysis. D75 lines the NADP(+) pocket. Shikimate-binding residues include N84 and D99. Residues 122 to 126, 144 to 149, and M205 each bind NADP(+); these read GAGGA and NRTLEK. Position 207 (Y207) interacts with shikimate. G228 provides a ligand contact to NADP(+).

Belongs to the shikimate dehydrogenase family. As to quaternary structure, homodimer.

The catalysed reaction is shikimate + NADP(+) = 3-dehydroshikimate + NADPH + H(+). It functions in the pathway metabolic intermediate biosynthesis; chorismate biosynthesis; chorismate from D-erythrose 4-phosphate and phosphoenolpyruvate: step 4/7. Involved in the biosynthesis of the chorismate, which leads to the biosynthesis of aromatic amino acids. Catalyzes the reversible NADPH linked reduction of 3-dehydroshikimate (DHSA) to yield shikimate (SA). The chain is Shikimate dehydrogenase (NADP(+)) from Ignicoccus hospitalis (strain KIN4/I / DSM 18386 / JCM 14125).